The sequence spans 203 residues: Sec-independent protein translocase protein TatB (203 aa).

The helical transmembrane segment at 1–21 (MFDIGWTELLVIAVVLIVVVG) threads the bilayer. The interval 179 to 203 (KPKRTTAVRKPATLKKPAQTKKDEA) is disordered.

It belongs to the TatB family. In terms of assembly, the Tat system comprises two distinct complexes: a TatABC complex, containing multiple copies of TatA, TatB and TatC subunits, and a separate TatA complex, containing only TatA subunits. Substrates initially bind to the TatABC complex, which probably triggers association of the separate TatA complex to form the active translocon.

It localises to the cell inner membrane. Its function is as follows. Part of the twin-arginine translocation (Tat) system that transports large folded proteins containing a characteristic twin-arginine motif in their signal peptide across membranes. Together with TatC, TatB is part of a receptor directly interacting with Tat signal peptides. TatB may form an oligomeric binding site that transiently accommodates folded Tat precursor proteins before their translocation. This is Sec-independent protein translocase protein TatB from Rhizobium johnstonii (strain DSM 114642 / LMG 32736 / 3841) (Rhizobium leguminosarum bv. viciae).